The primary structure comprises 196 residues: Pyridoxal 5'-phosphate synthase subunit PdxT (196 aa).

47–49 (GES) contacts L-glutamine. Cys-79 serves as the catalytic Nucleophile. L-glutamine contacts are provided by residues Arg-106 and 134 to 135 (IR). Residues His-170 and Glu-172 each act as charge relay system in the active site.

The protein belongs to the glutaminase PdxT/SNO family. In the presence of PdxS, forms a dodecamer of heterodimers. Only shows activity in the heterodimer.

It catalyses the reaction aldehydo-D-ribose 5-phosphate + D-glyceraldehyde 3-phosphate + L-glutamine = pyridoxal 5'-phosphate + L-glutamate + phosphate + 3 H2O + H(+). It carries out the reaction L-glutamine + H2O = L-glutamate + NH4(+). Its pathway is cofactor biosynthesis; pyridoxal 5'-phosphate biosynthesis. Functionally, catalyzes the hydrolysis of glutamine to glutamate and ammonia as part of the biosynthesis of pyridoxal 5'-phosphate. The resulting ammonia molecule is channeled to the active site of PdxS. The protein is Pyridoxal 5'-phosphate synthase subunit PdxT of Bacillus cytotoxicus (strain DSM 22905 / CIP 110041 / 391-98 / NVH 391-98).